The chain runs to 631 residues: Origin recognition complex subunit 1 (631 aa).

Composition is skewed to low complexity over residues 1–14 (MTDESSSSISYPPI) and 22–37 (KLNNNTNNNNKNNNNH). The segment at 1 to 164 (MTDESSSSIS…EEEDEEGKFN (164 aa)) is disordered. A compositionally biased stretch (basic and acidic residues) spans 55 to 80 (DNEKIGFSDPENEKINKHKASFKDSN). Positions 91-104 (EDTDDDDYEDEDED) are enriched in acidic residues. Positions 105 to 133 (ENHKIKDESDNSEDFNNHTKNTTDLDEGF) are enriched in basic and acidic residues. Residues 141 to 160 (ESEEEEEEEEYEEEEEEDEE) show a composition bias toward acidic residues. ATP-binding positions include Val230 and 265–273 (GMPGTGKTA). Mg(2+)-binding residues include Asp361 and Glu362. The ATP site is built by Glu362, Asn395, and Arg460.

This sequence belongs to the ORC1 family. ORC is composed of six subunits.

The protein localises to the nucleus. Component of the origin recognition complex (ORC) that binds origins of replication. DNA-binding is ATP-dependent, however specific DNA sequences that define origins of replication have not been identified so far. ORC is required to assemble the pre-replication complex necessary to initiate DNA replication. The protein is Origin recognition complex subunit 1 (orcA) of Dictyostelium discoideum (Social amoeba).